We begin with the raw amino-acid sequence, 183 residues long: MKKIEIDDELYRYIASETRHIGESASDILRRLLKLDAKQPVQPVVVTESVQAPVVKQDADLKPVAPAKNPVREMRELLLSDSYAEKTKSVDRFLQILSTLYSLDSATFTQSAETVHGRTRIYFAGDEKTLLDSGRHTKPRHIPGTPFWVITNSNTERKRTMVQSIMQDMQFPANEIDKVCGTI.

The interaction with DNA stretch occupies residues 118 to 122 (RTRIY).

The protein belongs to the SeqA family. Homodimer. Polymerizes to form helical filaments.

The protein localises to the cytoplasm. In terms of biological role, negative regulator of replication initiation, which contributes to regulation of DNA replication and ensures that replication initiation occurs exactly once per chromosome per cell cycle. Binds to pairs of hemimethylated GATC sequences in the oriC region, thus preventing assembly of replication proteins and re-initiation at newly replicated origins. Repression is relieved when the region becomes fully methylated. The chain is Negative modulator of initiation of replication from Proteus mirabilis (strain HI4320).